Consider the following 498-residue polypeptide: DNA-directed RNA polymerase subunit Rpo2N (498 aa).

Belongs to the RNA polymerase beta chain family. In terms of assembly, part of the RNA polymerase complex.

It localises to the cytoplasm. The enzyme catalyses RNA(n) + a ribonucleoside 5'-triphosphate = RNA(n+1) + diphosphate. DNA-dependent RNA polymerase (RNAP) catalyzes the transcription of DNA into RNA using the four ribonucleoside triphosphates as substrates. The Rpo2 subunit (Rpo2N and Rpo2C in this organism) is implicated in DNA promoter recognition and in nucleotide binding. The protein is DNA-directed RNA polymerase subunit Rpo2N of Methanocaldococcus jannaschii (strain ATCC 43067 / DSM 2661 / JAL-1 / JCM 10045 / NBRC 100440) (Methanococcus jannaschii).